The chain runs to 501 residues: MAVMIVLLIGVITFVAWYVHQHFNYWKRRGIPHDEPKIPYGNTSELMKTVHFADIFKRTYNKLRNKTDGPFVGFYMYFKRMVVVTDIDFAKTVLIREFDKFHDRGVFHNERDDPLSANLVNIDGQKWKTLRQKLTPTFTSGKMKTMFPTILTVGDELIRVFGETASADSDSMEITNVVARFTADVIGSCAFGLDCHSLSDPKAKFVQMGTTAITERRHGKSMDLLLFGAPELAAKLRMKATVQEVEDFYMNIIRDTVDYRVKNNVKRHDFVDMLIEMKLKFDNGDKENGLTFNEIAAQAFIFFLAGFETSSTTMGFALYELACHQDIQDKLRTEINTVLKQHNGKLDYDSMREMTYLEKVIDETMRKRPVVGHLIRVATQHYQHTNPKYNIEKGTGVIVPTLAIHHDPEFYPEPEKFIPERFDEDQVQQRPACTFLPFGDGPRNCIGLRFGRMQVIVGMALLIHNFKFEFHPTKTVVPLEYRTDDFLLSSKGGIHLKVTRV.

Residue C445 coordinates heme.

It belongs to the cytochrome P450 family. Heme is required as a cofactor.

It localises to the endoplasmic reticulum membrane. Its subcellular location is the microsome membrane. Its function is as follows. May be involved in the metabolism of insect hormones and in the breakdown of synthetic insecticides. The polypeptide is Probable cytochrome P450 6a20 (Cyp6a20) (Drosophila melanogaster (Fruit fly)).